A 390-amino-acid polypeptide reads, in one-letter code: Putative nickel insertion protein (390 aa).

It belongs to the LarC family.

In Geotalea uraniireducens (strain Rf4) (Geobacter uraniireducens), this protein is Putative nickel insertion protein.